The chain runs to 313 residues: Protein FixB (313 aa).

An FAD-binding site is contributed by 255–283 (LYLAVGISGQIQHMVGANASQTIFAINKD).

It belongs to the ETF alpha-subunit/FixB family. Heterodimer of FixA and FixB.

It functions in the pathway amine and polyamine metabolism; carnitine metabolism. In terms of biological role, required for anaerobic carnitine reduction. May bring reductant to CaiA. This is Protein FixB from Shigella dysenteriae serotype 1 (strain Sd197).